Here is a 273-residue protein sequence, read N- to C-terminus: 4-hydroxy-tetrahydrodipicolinate reductase (273 aa).

NAD(+) contacts are provided by residues G12–M17 and E38. R39 provides a ligand contact to NADP(+). Residues G102 to T104 and A126 to F129 each bind NAD(+). The active-site Proton donor/acceptor is the H159. H160 contacts (S)-2,3,4,5-tetrahydrodipicolinate. Catalysis depends on K163, which acts as the Proton donor. (S)-2,3,4,5-tetrahydrodipicolinate is bound at residue G169–T170.

It belongs to the DapB family. In terms of assembly, homotetramer.

It is found in the cytoplasm. It carries out the reaction (S)-2,3,4,5-tetrahydrodipicolinate + NAD(+) + H2O = (2S,4S)-4-hydroxy-2,3,4,5-tetrahydrodipicolinate + NADH + H(+). The enzyme catalyses (S)-2,3,4,5-tetrahydrodipicolinate + NADP(+) + H2O = (2S,4S)-4-hydroxy-2,3,4,5-tetrahydrodipicolinate + NADPH + H(+). The protein operates within amino-acid biosynthesis; L-lysine biosynthesis via DAP pathway; (S)-tetrahydrodipicolinate from L-aspartate: step 4/4. Catalyzes the conversion of 4-hydroxy-tetrahydrodipicolinate (HTPA) to tetrahydrodipicolinate. In Proteus mirabilis (strain HI4320), this protein is 4-hydroxy-tetrahydrodipicolinate reductase.